We begin with the raw amino-acid sequence, 434 residues long: NFATC2-interacting protein (434 aa).

Disordered stretches follow at residues 1-63 (MGSP…TPAL) and 176-237 (GSED…RAYN). Positions 28-59 (GPQPCPKPRGPQPCPKPRGPQPCPKPRGPQPC) are enriched in pro residues. Over residues 228-237 (PVRRKGRAYN) the composition is skewed to basic residues. The Ubiquitin-like domain occupies 275 to 351 (PELTVKVRRG…IDCVVLSPPD (77 aa)).

The protein localises to the nucleus. It is found in the cytoplasm. Regulates the magnitude of NFAT-driven transcription of a specific subset of cytokine genes. This chain is NFATC2-interacting protein (nfatc2ip), found in Xenopus tropicalis (Western clawed frog).